A 143-amino-acid polypeptide reads, in one-letter code: Nucleoside diphosphate kinase (143 aa).

ATP-binding residues include Lys11, Phe59, Arg87, Thr93, Arg104, and Asn114. Catalysis depends on His117, which acts as the Pros-phosphohistidine intermediate.

Belongs to the NDK family. Homotetramer. Requires Mg(2+) as cofactor.

The protein resides in the cytoplasm. The catalysed reaction is a 2'-deoxyribonucleoside 5'-diphosphate + ATP = a 2'-deoxyribonucleoside 5'-triphosphate + ADP. It carries out the reaction a ribonucleoside 5'-diphosphate + ATP = a ribonucleoside 5'-triphosphate + ADP. Its function is as follows. Major role in the synthesis of nucleoside triphosphates other than ATP. The ATP gamma phosphate is transferred to the NDP beta phosphate via a ping-pong mechanism, using a phosphorylated active-site intermediate. The chain is Nucleoside diphosphate kinase from Psychrobacter cryohalolentis (strain ATCC BAA-1226 / DSM 17306 / VKM B-2378 / K5).